We begin with the raw amino-acid sequence, 119 residues long: uncharacterized protein (119 aa).

To Synechocystis PCC 6803 slr0903.

This is an uncharacterized protein from Methanocaldococcus jannaschii (strain ATCC 43067 / DSM 2661 / JAL-1 / JCM 10045 / NBRC 100440) (Methanococcus jannaschii).